A 350-amino-acid chain; its full sequence is Phenylalanine--tRNA ligase alpha subunit (350 aa).

Position 271 (E271) interacts with Mg(2+).

It belongs to the class-II aminoacyl-tRNA synthetase family. Phe-tRNA synthetase alpha subunit type 1 subfamily. Tetramer of two alpha and two beta subunits. Requires Mg(2+) as cofactor.

It localises to the cytoplasm. It catalyses the reaction tRNA(Phe) + L-phenylalanine + ATP = L-phenylalanyl-tRNA(Phe) + AMP + diphosphate + H(+). The chain is Phenylalanine--tRNA ligase alpha subunit from Paracidovorax citrulli (strain AAC00-1) (Acidovorax citrulli).